We begin with the raw amino-acid sequence, 440 residues long: Argininosuccinate lyase (440 aa).

The protein belongs to the lyase 1 family. Argininosuccinate lyase subfamily.

The protein localises to the cytoplasm. It carries out the reaction 2-(N(omega)-L-arginino)succinate = fumarate + L-arginine. It functions in the pathway amino-acid biosynthesis; L-arginine biosynthesis; L-arginine from L-ornithine and carbamoyl phosphate: step 3/3. This Clostridium botulinum (strain 657 / Type Ba4) protein is Argininosuccinate lyase.